We begin with the raw amino-acid sequence, 120 residues long: U13-lycotoxin-Ls1c (120 aa).

Residues 1–16 (MKILFVLISILYAVYC) form the signal peptide. The propeptide occupies 17–54 (FSSEEDVDSAYLANELEPVEDINSEQYAALEPKEEQER). Intrachain disulfides connect Cys56–Cys70, Cys69–Cys87, and Cys78–Cys85. The region spanning 56 to 95 (CADMGQDRKDDCDCCLNIATCNCWFGRYFCSCTFGDYQTC) is the Agouti domain.

This sequence belongs to the neurotoxin 05 (agouti) family. In terms of processing, contains 5 disulfide bonds. In terms of tissue distribution, expressed by the venom gland.

The protein localises to the secreted. The chain is U13-lycotoxin-Ls1c from Lycosa singoriensis (Wolf spider).